Reading from the N-terminus, the 299-residue chain is uncharacterized protein (299 aa).

This is an uncharacterized protein from Archaeoglobus fulgidus (strain ATCC 49558 / DSM 4304 / JCM 9628 / NBRC 100126 / VC-16).